The sequence spans 192 residues: Ribosome maturation factor RimM (192 aa).

The 88-residue stretch at 99–186 folds into the PRC barrel domain; the sequence is ADEYHVSELV…RIEIAPPPGL (88 aa).

It belongs to the RimM family. Binds ribosomal protein uS19.

It is found in the cytoplasm. Its function is as follows. An accessory protein needed during the final step in the assembly of 30S ribosomal subunit, possibly for assembly of the head region. Essential for efficient processing of 16S rRNA. May be needed both before and after RbfA during the maturation of 16S rRNA. It has affinity for free ribosomal 30S subunits but not for 70S ribosomes. The protein is Ribosome maturation factor RimM of Microcystis aeruginosa (strain NIES-843 / IAM M-2473).